We begin with the raw amino-acid sequence, 216 residues long: Holliday junction branch migration complex subunit RuvA (216 aa).

Positions 1 to 64 (MISFIKGVLI…EDAQQLYGFK (64 aa)) are domain I. The segment at 65 to 143 (SKVDKKVFQE…KMANEIYAQT (79 aa)) is domain II. The tract at residues 144–163 (SGTTTTSQDSQAQQAPTSVV) is flexible linker. Residues 164 to 216 (LANSIFNESVDALLALGYKQKDAEKMARSAMGDATTAAEVIRKALQGSIKSKG) are domain III.

This sequence belongs to the RuvA family. As to quaternary structure, homotetramer. Forms an RuvA(8)-RuvB(12)-Holliday junction (HJ) complex. HJ DNA is sandwiched between 2 RuvA tetramers; dsDNA enters through RuvA and exits via RuvB. An RuvB hexamer assembles on each DNA strand where it exits the tetramer. Each RuvB hexamer is contacted by two RuvA subunits (via domain III) on 2 adjacent RuvB subunits; this complex drives branch migration. In the full resolvosome a probable DNA-RuvA(4)-RuvB(12)-RuvC(2) complex forms which resolves the HJ.

It is found in the cytoplasm. Its function is as follows. The RuvA-RuvB-RuvC complex processes Holliday junction (HJ) DNA during genetic recombination and DNA repair, while the RuvA-RuvB complex plays an important role in the rescue of blocked DNA replication forks via replication fork reversal (RFR). RuvA specifically binds to HJ cruciform DNA, conferring on it an open structure. The RuvB hexamer acts as an ATP-dependent pump, pulling dsDNA into and through the RuvAB complex. HJ branch migration allows RuvC to scan DNA until it finds its consensus sequence, where it cleaves and resolves the cruciform DNA. This is Holliday junction branch migration complex subunit RuvA from Francisella tularensis subsp. holarctica (strain FTNF002-00 / FTA).